The sequence spans 337 residues: RAD51-associated protein 1 (337 aa).

2 disordered regions span residues 1–69 (MVRP…PPKK) and 88–337 (LSVK…SQVR). A phosphoserine mark is found at Ser-19 and Ser-23. Positions 28-38 (ISSSTPVNKSK) are enriched in polar residues. The interaction with DNA stretch occupies residues 32–50 (TPVNKSKTVPKVLKQDKPK). A compositionally biased stretch (basic and acidic residues) spans 44 to 69 (LKQDKPKPNLKNLQKEEVLPTEPPKK). Ser-103 and Ser-107 each carry phosphoserine. Positions 105–118 (EKSTDKQGKEKTEN) are enriched in basic and acidic residues. The SIM motif motif lies at 138-143 (LDKITE). Residues 190-205 (SESDPDFDESKESDED) show a composition bias toward acidic residues. Positions 225-286 (GEKKERKSKP…PSAESKRPKW (62 aa)) are interaction with DNA. Residue Lys-251 forms a Glycyl lysine isopeptide (Lys-Gly) (interchain with G-Cter in SUMO; alternate) linkage. A Glycyl lysine isopeptide (Lys-Gly) (interchain with G-Cter in ubiquitin; alternate) cross-link involves residue Lys-251. The WVPP motif motif lies at 286–289 (WVPP). Positions 290-304 (AASGSRNSSSNALAG) are enriched in low complexity. The interval 295 to 334 (RNSSSNALAGTPAKSPSQSLRLGLSRLAPVKRLHPSATSS) is interaction with RAD51. Phosphoserine is present on Ser-309.

As to quaternary structure, monomer; elongated monodisperse monomer. Interacts (via C-terminal region) with RAD51; the interaction is direct. Interacts (via SIM motif) with WDR48/UAF1; WDR48/UAF1 and RAD51AP1 cooperate together to stimulate RAD51-mediated homologous recombination (HR). Interacts (via WVPP motif) with DMC1; the interaction is direct. Interacts with PALB2. Interacts with RAD52. In terms of processing, sumoylation with SUMO2/3 by NSMCE2/MMS21 promotes stabilization, possibly by preventing ubiquitination. In terms of tissue distribution, most abundantly expressed in testis. Also expressed in spleen, thymus and bone marrow. Not detected in heart, kidney or liver.

Its subcellular location is the chromosome. It localises to the nucleus. The protein resides in the telomere. Its function is as follows. Structure-specific DNA-binding protein involved in DNA repair by promoting RAD51-mediated homologous recombination. Acts by stimulating D-Loop formation by RAD51: specifically enhances joint molecule formation through its structure-specific DNA interaction and its interaction with RAD51. Binds single-stranded DNA (ssDNA), double-stranded DNA (dsDNA) and secondary DNA structures, such as D-loop structures: has a strong preference for branched-DNA structures that are obligatory intermediates during joint molecule formation. Cooperates with WDR48/UAF1 to stimulate RAD51-mediated homologous recombination: both WDR48/UAF1 and RAD51AP1 have coordinated role in DNA-binding during homologous recombination and DNA repair. WDR48/UAF1 and RAD51AP1 also have a coordinated role in DNA-binding to promote USP1-mediated deubiquitination of FANCD2. Also involved in meiosis by promoting DMC1-mediated homologous meiotic recombination. This Mus musculus (Mouse) protein is RAD51-associated protein 1.